Reading from the N-terminus, the 419-residue chain is L-rhamnose isomerase (419 aa).

3 residues coordinate Mn(2+): histidine 262, aspartate 294, and aspartate 296.

Belongs to the rhamnose isomerase family. Homotetramer. Mn(2+) serves as cofactor.

Its subcellular location is the cytoplasm. The enzyme catalyses L-rhamnopyranose = L-rhamnulose. It functions in the pathway carbohydrate degradation; L-rhamnose degradation; glycerone phosphate from L-rhamnose: step 1/3. Catalyzes the interconversion of L-rhamnose and L-rhamnulose. The protein is L-rhamnose isomerase of Salmonella paratyphi A (strain AKU_12601).